The chain runs to 434 residues: Adenylosuccinate synthetase (434 aa).

GTP-binding positions include 22–28 (GDEGKGK) and 50–52 (GHT). The active-site Proton acceptor is the D23. Residues D23 and G50 each coordinate Mg(2+). IMP contacts are provided by residues 23 to 26 (DEGK), 48 to 51 (NAGH), T139, R153, Q234, T249, and R313. H51 serves as the catalytic Proton donor. A substrate-binding site is contributed by 309-315 (ATTGRKR). GTP contacts are provided by residues R315, 341 to 343 (KLD), and 423 to 425 (SVG).

This sequence belongs to the adenylosuccinate synthetase family. As to quaternary structure, homodimer. Mg(2+) serves as cofactor.

It localises to the cytoplasm. It carries out the reaction IMP + L-aspartate + GTP = N(6)-(1,2-dicarboxyethyl)-AMP + GDP + phosphate + 2 H(+). It functions in the pathway purine metabolism; AMP biosynthesis via de novo pathway; AMP from IMP: step 1/2. In terms of biological role, plays an important role in the de novo pathway of purine nucleotide biosynthesis. Catalyzes the first committed step in the biosynthesis of AMP from IMP. The protein is Adenylosuccinate synthetase of Chlorobium limicola (strain DSM 245 / NBRC 103803 / 6330).